The primary structure comprises 211 residues: Small ribosomal subunit protein uS3 (211 aa).

Positions 38–106 (LRKFIKKAFY…NIELNIIEVK (69 aa)) constitute a KH type-2 domain.

This sequence belongs to the universal ribosomal protein uS3 family. As to quaternary structure, part of the 30S ribosomal subunit. Forms a tight complex with proteins S10 and S14.

Its function is as follows. Binds the lower part of the 30S subunit head. Binds mRNA in the 70S ribosome, positioning it for translation. In Ehrlichia ruminantium (strain Gardel), this protein is Small ribosomal subunit protein uS3.